Here is a 190-residue protein sequence, read N- to C-terminus: Elongation factor P-like protein (190 aa).

It belongs to the elongation factor P family.

The sequence is that of Elongation factor P-like protein from Shigella boydii serotype 4 (strain Sb227).